Consider the following 508-residue polypeptide: MVSLSTSTSHAPPLPTNRRTAERTFTVRCISISPREPNYAITSDKSNNTSLSLRETRQSKWLINAEDVNERDSKEIKEDKNTKIASRKAISIILRREATKSIIEKKKGSKKLLPRTVLESLHERITALRWESAIQVFELLREQLWYKPNVGIYVKLIVMLGKCKQPEKAHELFQEMINEGCVVNHEVYTALVSAYSRSGRFDAAFTLLERMKSSHNCQPDVHTYSILIKSFLQVFAFDKVQDLLSDMRRQGIRPNTITYNTLIDAYGKAKMFVEMESTLIQMLGEDDCKPDSWTMNSTLRAFGGNGQIEMMENCYEKFQSSGIEPNIRTFNILLDSYGKSGNYKKMSAVMEYMQKYHYSWTIVTYNVVIDAFGRAGDLKQMEYLFRLMQSERIFPSCVTLCSLVRAYGRASKADKIGGVLRFIENSDIRLDLVFFNCLVDAYGRMEKFAEMKGVLELMEKKGFKPDKITYRTMVKAYRISGMTTHVKELHGVVESVGEAQVVVKKPDF.

Positions 1–10 are enriched in polar residues; that stretch reads MVSLSTSTSH. The interval 1–22 is disordered; the sequence is MVSLSTSTSHAPPLPTNRRTAE. The transit peptide at 1 to 28 directs the protein to the chloroplast; it reads MVSLSTSTSHAPPLPTNRRTAERTFTVR. 10 PPR repeats span residues 149 to 183, 184 to 214, 220 to 254, 255 to 290, 291 to 325, 326 to 360, 361 to 395, 396 to 430, 431 to 465, and 466 to 500; these read NVGI…GCVV, NHEV…MKSS, DVHT…GIRP, NTIT…DCKP, DSWT…GIEP, NIRT…HYSW, TIVT…RIFP, SCVT…DIRL, DLVF…GFKP, and DKIT…GEAQ.

The protein belongs to the PPR family. P subfamily.

The protein resides in the plastid. The protein localises to the chloroplast. This Arabidopsis thaliana (Mouse-ear cress) protein is Pentatricopeptide repeat-containing protein At5g48730, chloroplastic.